The following is a 531-amino-acid chain: Protein arginine N-methyltransferase 3 (531 aa).

Positions 1–43 (MCSLASGATGGRGAVENEEDLPELSDSGDEAAWEDEDDADLPH) are disordered. The residue at position 2 (C2) is an N-acetylcysteine. Residues 16 to 39 (ENEEDLPELSDSGDEAAWEDEDDA) are compositionally biased toward acidic residues. Phosphoserine occurs at positions 25 and 27. Residues 48–71 (TPCLFCNRLFTSAEETFSHCKSEH) form a C2H2-type zinc finger. Residues 48-71 (TPCLFCNRLFTSAEETFSHCKSEH) form an interaction with ZNF200 region. Phosphoserine is present on S171. Residues 186–531 (MKQFAQDFVM…NNSTQTYGLQ (346 aa)) form a mediates interaction with ALDH1A1 region. The SAM-dependent MTase PRMT-type domain maps to 217–531 (DGVYFSSYGH…NNSTQTYGLQ (315 aa)). The S-adenosyl-L-homocysteine site is built by R239, G263, D285, I313, and E314. Residues E329 and E338 contribute to the active site. S343 serves as a coordination point for S-adenosyl-L-homocysteine.

This sequence belongs to the class I-like SAM-binding methyltransferase superfamily. Protein arginine N-methyltransferase family. As to quaternary structure, monomer and homodimer. Interacts with EPB41L3 (via FERM domain); the interaction is direct and inhibits the protein-arginine N-methyltransferase activity of PRMT3. Interacts with the 40S ribosomal protein RPS2. Interacts with ALDH1A1; the interaction is direct, inhibits ALDH1A1 aldehyde dehydrogenase activity and is independent of the methyltransferase activity of PRMT3. Interacts (via zinc-finger) with ZNF200 (via C-terminus); the interaction is direct and required to localize PRMT3 to the nucleus and inhibit its proteasomal degradation.

It is found in the cytoplasm. Its subcellular location is the cytosol. The protein localises to the nucleus. The catalysed reaction is L-arginyl-[protein] + S-adenosyl-L-methionine = N(omega)-methyl-L-arginyl-[protein] + S-adenosyl-L-homocysteine + H(+). It catalyses the reaction L-arginyl-[protein] + 2 S-adenosyl-L-methionine = N(omega),N(omega)-dimethyl-L-arginyl-[protein] + 2 S-adenosyl-L-homocysteine + 2 H(+). Its activity is regulated as follows. Inhibited by N-ethylmaleimide and high concentrations of zinc chloride. Allosterically inhibited by SGC707. Allosterically inhibited by (1-(benzo[d][1,2,3]thiadiazol- 6-yl)-3-(2-cyclohexenylethyl)urea) and derivatives thereof. In terms of biological role, protein-arginine N-methyltransferase that catalyzes both the monomethylation and asymmetric dimethylation of the guanidino nitrogens of arginine residues in target proteins, and therefore falls into the group of type I methyltransferases. Catalyzes the asymmetric arginine dimethylation at multiple sites in the Arg/Gly-rich region of small ribosomal subunit protein uS5/RPS2. Also appears to methylate other ribosomal proteins. May regulate retinoic acid synthesis and signaling by inhibiting ALDH1A1 retinal dehydrogenase activity. Contributes to methylation of histone H4 'Arg-3', a specific tag for epigenetic transcriptional activation. Mediates asymmetric arginine dimethylation of histone H4 'Arg-3' (H4R3me2a) in the promoter region of miRNA miR-3648, to promote its transcription and osteogenesis. The protein is Protein arginine N-methyltransferase 3 of Homo sapiens (Human).